Consider the following 338-residue polypeptide: Solute carrier family 35 member G5 (338 aa).

The segment at 1-27 is disordered; the sequence is MAGSHPYFNLPDSTHPSPPSAPPSLRW. 9 helical membrane passes run 37–57, 67–87, 102–122, 160–180, 190–210, 221–241, 250–270, 281–301, and 305–325; these read TNGLLVALLGGGLPAGFVGPL, LPSLELLICRCLFHLPIALLL, GWACFCALLNVLSIGCAYSAV, CGLLGSILGLIIILGPGLWTL, TLGYVQAFLGGLALSLGLLVY, TVAFLSGLVGLLGCVPGLFVL, LLSWSCVGAEGILALVSFTCV, LVCAVLHSEVVVALILQYYML, and VALSDIMGAGVVLGSIAIITA. The region spanning 49-174 is the EamA 1 domain; sequence LPAGFVGPLS…SILGLIIILG (126 aa). Residues 272-325 enclose the EamA 2 domain; that stretch reads YAVTKAHPALVCAVLHSEVVVALILQYYMLHETVALSDIMGAGVVLGSIAIITA.

It belongs to the SLC35G solute transporter family. As to expression, expressed in placenta and testis.

It is found in the membrane. This chain is Solute carrier family 35 member G5 (SLC35G5), found in Homo sapiens (Human).